The following is a 1178-amino-acid chain: Tricalbin-2 (1178 aa).

Polar residues predominate over residues 1–17 (MSPNSSKTRTDQISSMP). Residues 1–27 (MSPNSSKTRTDQISSMPGINEATKVES) are disordered. Over 1-98 (MSPNSSKTRT…NLLPDKFYGD (98 aa)) the chain is Cytoplasmic. Residues 99 to 119 (WYHEVAILIIAGLCSFVLGYF) form a helical membrane-spanning segment. Residue Lys120 is a topological domain, extracellular. A helical membrane pass occupies residues 121–141 (FSLASVLIVMLTTGMLYRTSS). Residues 142-1178 (KKYRESLRDL…TGDKKSEEKQ (1037 aa)) lie on the Cytoplasmic side of the membrane. Residues 164-367 (DYESVEWLNT…PPFSLQLNIP (204 aa)) enclose the SMP-LTD domain. 3 consecutive C2 domains span residues 358–481 (PPFS…EKVH), 504–628 (PKKL…LKVT), and 632–749 (RPVD…DKYT). The stretch at 784–821 (LSLEEAKEVDEINEKKDKLEKQKSTLDDKNISKEEKER) forms a coiled coil. Residues 962 to 1086 (QVSWFPVTAT…DPESDTTFNI (125 aa)) form the C2 4 domain. Position 991 is a phosphoserine (Ser991).

This sequence belongs to the tricalbin family. Interacts with TCB1 and TCB3 via its C-terminal domain.

It localises to the cell membrane. The protein localises to the endoplasmic reticulum membrane. May play a role in membrane trafficking. This chain is Tricalbin-2 (TCB2), found in Saccharomyces cerevisiae (strain ATCC 204508 / S288c) (Baker's yeast).